The following is a 597-amino-acid chain: ATP-dependent lipid A-core flippase (597 aa).

6 consecutive transmembrane segments (helical) span residues 26-46, 65-85, 144-164, 166-186, 250-270, and 276-296; these read WIFAASIITMAIYAATETGLA, IQIIPLLLIGLFVIRGGANFI, ILTIIRDSLTILGLLAWMAYL, GLLTLIILVTAPLIALIIWWV, AISQPVVQLIAVLGLAGVIHL, and MLAQISVGTFISFITAMMLLL. Residues 29-311 enclose the ABC transmembrane type-1 domain; sequence AASIITMAIY…LTKINGTLQR (283 aa). Positions 343–579 constitute an ABC transporter domain; it reads IRFEHLSFCY…ESHYAGLYRL (237 aa). 377–384 contacts ATP; that stretch reads GHSGSGKS.

This sequence belongs to the ABC transporter superfamily. Lipid exporter (TC 3.A.1.106) family. In terms of assembly, homodimer.

The protein resides in the cell inner membrane. It carries out the reaction ATP + H2O + lipid A-core oligosaccharideSide 1 = ADP + phosphate + lipid A-core oligosaccharideSide 2.. Its function is as follows. Involved in lipopolysaccharide (LPS) biosynthesis. Translocates lipid A-core from the inner to the outer leaflet of the inner membrane. Transmembrane domains (TMD) form a pore in the inner membrane and the ATP-binding domain (NBD) is responsible for energy generation. The polypeptide is ATP-dependent lipid A-core flippase (Nitrosococcus oceani (strain ATCC 19707 / BCRC 17464 / JCM 30415 / NCIMB 11848 / C-107)).